A 346-amino-acid chain; its full sequence is Sesquiterpene synthase Agr1 (346 aa).

Residues Asp98, Asn234, Ser238, and Glu242 each contribute to the Mg(2+) site. The short motif at 98 to 102 (DNLSD) is the DDXXD motif element. Positions 322 and 323 each coordinate (2E,6E)-farnesyl diphosphate.

It belongs to the terpene synthase family. The cofactor is Mg(2+).

It catalyses the reaction (2E,6E)-farnesyl diphosphate = delta-cadinene + diphosphate. It carries out the reaction (2E,6E)-farnesyl diphosphate = alpha-muurolene + diphosphate. The enzyme catalyses (2E,6E)-farnesyl diphosphate = gamma-muurolene + diphosphate. The catalysed reaction is (2E,6E)-farnesyl diphosphate = alpha-selinene + diphosphate. Its function is as follows. Terpene cyclase that catalyzes the cyclization of farnesyl diphosphate (FPP) to various sesquiterpenes, including alpha-muurolene, gamma-muurolene, alpha-selinene, beta-selinene, delta-cadinene, alpha-cadinol and delta-cadinol. Delta-cadinene is the major product of Agr1. The protein is Sesquiterpene synthase Agr1 of Cyclocybe aegerita (Black poplar mushroom).